The sequence spans 268 residues: Tryptophan synthase alpha chain (268 aa).

Catalysis depends on proton acceptor residues E49 and D60.

The protein belongs to the TrpA family. In terms of assembly, tetramer of two alpha and two beta chains.

It carries out the reaction (1S,2R)-1-C-(indol-3-yl)glycerol 3-phosphate + L-serine = D-glyceraldehyde 3-phosphate + L-tryptophan + H2O. The protein operates within amino-acid biosynthesis; L-tryptophan biosynthesis; L-tryptophan from chorismate: step 5/5. Functionally, the alpha subunit is responsible for the aldol cleavage of indoleglycerol phosphate to indole and glyceraldehyde 3-phosphate. This chain is Tryptophan synthase alpha chain, found in Mannheimia succiniciproducens (strain KCTC 0769BP / MBEL55E).